The chain runs to 153 residues: SsrA-binding protein (153 aa).

It belongs to the SmpB family.

It is found in the cytoplasm. Its function is as follows. Required for rescue of stalled ribosomes mediated by trans-translation. Binds to transfer-messenger RNA (tmRNA), required for stable association of tmRNA with ribosomes. tmRNA and SmpB together mimic tRNA shape, replacing the anticodon stem-loop with SmpB. tmRNA is encoded by the ssrA gene; the 2 termini fold to resemble tRNA(Ala) and it encodes a 'tag peptide', a short internal open reading frame. During trans-translation Ala-aminoacylated tmRNA acts like a tRNA, entering the A-site of stalled ribosomes, displacing the stalled mRNA. The ribosome then switches to translate the ORF on the tmRNA; the nascent peptide is terminated with the 'tag peptide' encoded by the tmRNA and targeted for degradation. The ribosome is freed to recommence translation, which seems to be the essential function of trans-translation. This chain is SsrA-binding protein, found in Macrococcus caseolyticus (strain JCSC5402) (Macrococcoides caseolyticum).